Here is a 200-residue protein sequence, read N- to C-terminus: Inner membrane-spanning protein YciB (200 aa).

Transmembrane regions (helical) follow at residues 7-27 (HPLF…FVNA), 32-52 (FAAT…SYVV), 56-76 (IPLM…LTLV), 93-113 (LFAA…AIMF), 126-146 (ILTF…EIIW), and 153-173 (FWVG…AIAQ).

Belongs to the YciB family.

It is found in the cell inner membrane. In terms of biological role, plays a role in cell envelope biogenesis, maintenance of cell envelope integrity and membrane homeostasis. The polypeptide is Inner membrane-spanning protein YciB (Bradyrhizobium sp. (strain ORS 278)).